The primary structure comprises 185 residues: Prenylated Rab acceptor protein 1 (185 aa).

At 1–78 (MAAQKDQQKD…RNVEYYQSNY (78 aa)) the chain is on the cytoplasmic side. Positions 30-54 (AGREWLERRRATIRPWSTFVDQQRF) are required for interaction with prenylated RAB3A and VAMP2. Helical transmembrane passes span 79-94 (VFVF…VTSP) and 95-112 (MLLV…ILYL). The Cytoplasmic portion of the chain corresponds to 113 to 131 (RTLESKLVLFGREVSPAHQ). 2 consecutive transmembrane segments (helical) span residues 132–148 (YALA…LAGA) and 149–165 (GSAV…VIGS). Residues 165–185 (SHAAFHQIEAVDGEELQMEPV) form a required for interaction with GDI1 region. The Cytoplasmic segment spans residues 166 to 185 (HAAFHQIEAVDGEELQMEPV). The segment at 175–185 (VDGEELQMEPV) is required for interaction with prenylated RAB3A and VAMP2. The homodimerization stretch occupies residues 175 to 185 (VDGEELQMEPV).

It belongs to the PRA1 family. In terms of assembly, homodimer. Interacts with VAMP2 (synaptobrevin-2), GDI1, and PCLO. Interacts specifically with prenylated Rab proteins; strongly with RAB4B, RAB5A and RAB5C, and weakly with RAB4A, RAB6, RAB7A, RAB17 and RAB22. Interacts with NDRG1. As to expression, ubiquitous. Strongest expression found in placenta, pituitary gland, kidney, lung and stomach.

The protein resides in the cell membrane. Its subcellular location is the cytoplasm. It localises to the golgi apparatus. The protein localises to the cytoplasmic vesicle. It is found in the secretory vesicle. The protein resides in the synaptic vesicle. In terms of biological role, general Rab protein regulator required for vesicle formation from the Golgi complex. May control vesicle docking and fusion by mediating the action of Rab GTPases to the SNARE complexes. In addition it inhibits the removal of Rab GTPases from the membrane by GDI. This Homo sapiens (Human) protein is Prenylated Rab acceptor protein 1 (RABAC1).